Here is a 29-residue protein sequence, read N- to C-terminus: Cytochrome b6-f complex subunit 8 (29 aa).

Residues 3-23 (IISLAWAALMVVFTFSLSLVV) form a helical membrane-spanning segment.

Belongs to the PetN family. The 4 large subunits of the cytochrome b6-f complex are cytochrome b6, subunit IV (17 kDa polypeptide, PetD), cytochrome f and the Rieske protein, while the 4 small subunits are PetG, PetL, PetM and PetN. The complex functions as a dimer.

The protein localises to the plastid. The protein resides in the chloroplast thylakoid membrane. Component of the cytochrome b6-f complex, which mediates electron transfer between photosystem II (PSII) and photosystem I (PSI), cyclic electron flow around PSI, and state transitions. The polypeptide is Cytochrome b6-f complex subunit 8 (Nicotiana tomentosiformis (Tobacco)).